The chain runs to 166 residues: ATP synthase subunit b (166 aa).

Residues 7 to 27 traverse the membrane as a helical segment; that stretch reads QFSLGLFILQIILFVGLILLL.

Belongs to the ATPase B chain family. As to quaternary structure, F-type ATPases have 2 components, F(1) - the catalytic core - and F(0) - the membrane proton channel. F(1) has five subunits: alpha(3), beta(3), gamma(1), delta(1), epsilon(1). F(0) has three main subunits: a(1), b(2) and c(10-14). The alpha and beta chains form an alternating ring which encloses part of the gamma chain. F(1) is attached to F(0) by a central stalk formed by the gamma and epsilon chains, while a peripheral stalk is formed by the delta and b chains.

It is found in the cell inner membrane. Functionally, f(1)F(0) ATP synthase produces ATP from ADP in the presence of a proton or sodium gradient. F-type ATPases consist of two structural domains, F(1) containing the extramembraneous catalytic core and F(0) containing the membrane proton channel, linked together by a central stalk and a peripheral stalk. During catalysis, ATP synthesis in the catalytic domain of F(1) is coupled via a rotary mechanism of the central stalk subunits to proton translocation. In terms of biological role, component of the F(0) channel, it forms part of the peripheral stalk, linking F(1) to F(0). In Flavobacterium psychrophilum (strain ATCC 49511 / DSM 21280 / CIP 103535 / JIP02/86), this protein is ATP synthase subunit b.